We begin with the raw amino-acid sequence, 1213 residues long: Hybrid signal transduction histidine kinase K (1213 aa).

4 disordered regions span residues 1 to 37 (MIEL…NKTN), 98 to 189 (NNNY…SSSS), 279 to 392 (NKNV…IPFR), and 495 to 565 (TTEQ…NYNN). 6 stretches are compositionally biased toward low complexity: residues 98–162 (NNNY…QKDQ), 171–189 (SLSS…SSSS), 279–331 (NKNV…NSGA), 339–371 (NNNN…SNNN), 498–511 (QQQQ…QQQQ), and 522–565 (QRQQ…NYNN). 6 consecutive transmembrane segments (helical) span residues 600 to 618 (IIFN…GSNI), 628 to 648 (LIIG…IFFW), 652 to 672 (INKP…SLVI), 676 to 696 (TGSI…ALTI), 729 to 749 (IQWS…NLYG), and 768 to 788 (IIDV…QYFI). Residues 822–1052 (TMSHEIRTPL…TFWFILPLEE (231 aa)) enclose the Histidine kinase domain. A Phosphohistidine; by autocatalysis modification is found at His825. The Response regulatory domain maps to 1076 to 1199 (KVLIAEDNII…QLRSAIEMAI (124 aa)). Position 1125 is a 4-aspartylphosphate (Asp1125).

Post-translationally, activation probably requires transfer of a phosphate group between a histidine in the kinase core (transmitter) domain and an aspartate of the receiver domain.

The protein localises to the nucleus membrane. The enzyme catalyses ATP + protein L-histidine = ADP + protein N-phospho-L-histidine.. Functionally, involved in a signal transduction pathway that regulates morphogenesis and controls entry into the culmination stage. May act via the regA pathway, being activated by a morphogenesis-stimulated ligand, reducing phosphodiesterase regA levels and allowing cAMP level to rise to promote the culmination stage. This protein probably undergoes an ATP-dependent autophosphorylation at a conserved histidine residue in the kinase core, and a phosphoryl group is then transferred to a conserved aspartate residue in the receiver domain. This chain is Hybrid signal transduction histidine kinase K (dhkK), found in Dictyostelium discoideum (Social amoeba).